A 157-amino-acid polypeptide reads, in one-letter code: UPF0756 membrane protein ABC2716 (157 aa).

4 helical membrane passes run F8 to I28, L54 to F74, L84 to I104, and L117 to I137.

This sequence belongs to the UPF0756 family.

It is found in the cell membrane. This Shouchella clausii (strain KSM-K16) (Alkalihalobacillus clausii) protein is UPF0756 membrane protein ABC2716.